The chain runs to 202 residues: Peptidyl-tRNA hydrolase (202 aa).

Y14 serves as a coordination point for tRNA. The active-site Proton acceptor is the H19. Positions 64, 66, and 112 each coordinate tRNA.

This sequence belongs to the PTH family. Monomer.

The protein localises to the cytoplasm. It carries out the reaction an N-acyl-L-alpha-aminoacyl-tRNA + H2O = an N-acyl-L-amino acid + a tRNA + H(+). In terms of biological role, hydrolyzes ribosome-free peptidyl-tRNAs (with 1 or more amino acids incorporated), which drop off the ribosome during protein synthesis, or as a result of ribosome stalling. Its function is as follows. Catalyzes the release of premature peptidyl moieties from peptidyl-tRNA molecules trapped in stalled 50S ribosomal subunits, and thus maintains levels of free tRNAs and 50S ribosomes. The protein is Peptidyl-tRNA hydrolase of Methylobacterium radiotolerans (strain ATCC 27329 / DSM 1819 / JCM 2831 / NBRC 15690 / NCIMB 10815 / 0-1).